The sequence spans 158 residues: UPF0303 protein SCO2848 (158 aa).

It belongs to the UPF0303 family.

In Streptomyces coelicolor (strain ATCC BAA-471 / A3(2) / M145), this protein is UPF0303 protein SCO2848.